Consider the following 217-residue polypeptide: ACIGVFSLVKIYQHEYIFALWLMFITVVIDAVDGTLARLVNIKKILPKIDGALLDNIVDYLNYVITPCFFLLVKPGMLPPEYSVFLIAAVSITSAYQFCQCDAKTPDHFFKGFPCYWNITILYMFIFNTSAATNAIILIILSILIFVPVKYVYPSRLDYLTESRILKILMHICSIIYAVSSICILISYPNTNIICLSLSVAYVGMYLFLSFYRTYYP.

The chain crosses the membrane as a helical span at residues 1–8 (ACIGVFSL). Over 9–16 (VKIYQHEY) the chain is Periplasmic. A helical transmembrane segment spans residues 17 to 37 (IFALWLMFITVVIDAVDGTLA). The Cytoplasmic segment spans residues 38 to 50 (RLVNIKKILPKID). The chain crosses the membrane as a helical span at residues 51–71 (GALLDNIVDYLNYVITPCFFL). Residues 72–77 (LVKPGM) lie on the Periplasmic side of the membrane. Residues 78 to 98 (LPPEYSVFLIAAVSITSAYQF) traverse the membrane as a helical segment. At 99–107 (CQCDAKTPD) the chain is on the cytoplasmic side. The chain crosses the membrane as a helical span at residues 108-128 (HFFKGFPCYWNITILYMFIFN). Residue Thr-129 is a topological domain, periplasmic. The helical transmembrane segment at 130–149 (SAATNAIILIILSILIFVPV) threads the bilayer. Residues 150–164 (KYVYPSRLDYLTESR) are Cytoplasmic-facing. A helical membrane pass occupies residues 165–185 (ILKILMHICSIIYAVSSICIL). Topologically, residues 186-191 (ISYPNT) are periplasmic. A helical membrane pass occupies residues 192-212 (NIICLSLSVAYVGMYLFLSFY). Residues 213-217 (RTYYP) lie on the Cytoplasmic side of the membrane.

Belongs to the CDP-alcohol phosphatidyltransferase class-I family. It depends on Mn(2+) as a cofactor.

Its subcellular location is the cell inner membrane. The enzyme catalyses a CDP-1,2-diacyl-sn-glycerol + choline = a 1,2-diacyl-sn-glycero-3-phosphocholine + CMP + H(+). Functionally, condenses choline with CDP-diglyceride to produce phosphatidylcholine and CMP. The chain is Phosphatidylcholine synthase from Legionella bozemanae (Fluoribacter bozemanae).